Here is a 419-residue protein sequence, read N- to C-terminus: AT-rich binding protein (419 aa).

The C2H2-type 1 zinc finger occupies 29–52; it reads IVCHTCQEELQTQDAFWKHIQDEH. A disordered region spans residues 121-179; the sequence is LHEAQHQQQQQQQQHQQQQQQQQHQQQQQHQHHQHQQQQQHLHQQQQQQQQQQRDAAKE. Low complexity-rich tracts occupy residues 126 to 149 and 156 to 173; these read HQQQ…QQQQ and QQQQ…QQQQ. 2 C2H2-type zinc fingers span residues 352 to 376 and 382 to 405; these read YVCD…RVVH and FNCD…KKKH.

The protein resides in the nucleus. May be a transcription factor for genes having (A+T) stretches in their promoter and/or enhancer regions. Binds to AT rich DNA. In Drosophila grimshawi (Hawaiian fruit fly), this protein is AT-rich binding protein.